The primary structure comprises 515 residues: Glucose-6-phosphate 1-dehydrogenase (515 aa).

Residue A2 is modified to N-acetylalanine. S8 carries the phosphoserine modification. The residue at position 10 (T10) is a Phosphothreonine. NADP(+) is bound by residues 38–45 (GASGDLAK) and R72. N6-acetyllysine is present on K89. Residues Y147 and K171 each contribute to the NADP(+) site. Residues K171, 201–205 (HYLGK), E239, and D258 contribute to the D-glucose 6-phosphate site. The residue at position 171 (K171) is an N6-(2-hydroxyisobutyryl)lysine; alternate. K171 carries the post-translational modification N6-acetyllysine; alternate. H263 acts as the Proton acceptor in catalysis. R357 provides a ligand contact to NADP(+). D-glucose 6-phosphate-binding residues include K360 and R365. NADP(+)-binding residues include K366, R370, and R393. Q395 contributes to the D-glucose 6-phosphate binding site. Residues 401 to 403 (YTK) and 421 to 423 (DLT) contribute to the NADP(+) site. K403 is subject to N6-acetyllysine. At K432 the chain carries N6-acetyllysine. R487 serves as a coordination point for NADP(+). At K497 the chain carries N6-acetyllysine. NADP(+)-binding residues include Y503 and W509. At Y503 the chain carries Phosphotyrosine.

It belongs to the glucose-6-phosphate dehydrogenase family. As to quaternary structure, homotetramer; dimer of dimers. Interacts with SIRT2; the interaction is enhanced by H(2)O(2) treatment. Forms a ternary complex with ALDOB and TP53; this interaction is direct. ALDOB stabilizes the complex inhibiting G6PD activity and keeping oxidative pentose phosphate metabolism in check. Acetylated by ELP3 at Lys-403; acetylation inhibits its homodimerization and enzyme activity. Deacetylated by SIRT2 at Lys-403; deacetylation stimulates its enzyme activity.

Its subcellular location is the cytoplasm. It localises to the cytosol. The protein localises to the membrane. It catalyses the reaction D-glucose 6-phosphate + NADP(+) = 6-phospho-D-glucono-1,5-lactone + NADPH + H(+). It functions in the pathway carbohydrate degradation; pentose phosphate pathway; D-ribulose 5-phosphate from D-glucose 6-phosphate (oxidative stage): step 1/3. Functionally, cytosolic glucose-6-phosphate dehydrogenase that catalyzes the first and rate-limiting step of the oxidative branch within the pentose phosphate pathway/shunt, an alternative route to glycolysis for the dissimilation of carbohydrates and a major source of reducing power and metabolic intermediates for fatty acid and nucleic acid biosynthetic processes. The polypeptide is Glucose-6-phosphate 1-dehydrogenase (G6PD) (Osphranter robustus (Wallaroo)).